We begin with the raw amino-acid sequence, 368 residues long: Cytochrome-c peroxidase IdrP2 (368 aa).

Positions 1–27 (MKWHRGRLTQTLGAMGLTATLTVAAQA) are cleaved as a signal peptide. Cytochrome c domains lie at 48-158 (AMIE…ALWQ) and 201-346 (KEAQ…LTLS). Heme c-binding residues include C70, C73, H74, C216, C219, and H220.

In terms of assembly, the iodate reductase (Idr) complex is composed of a molybdopterin-dependent iodate reductase (IdrA and IdrB subunits) and two associated peroxidases (IdrP1 and IdrP2). Heme c is required as a cofactor.

It is found in the periplasm. It catalyses the reaction 2 Fe(II)-[cytochrome c] + H2O2 + 2 H(+) = 2 Fe(III)-[cytochrome c] + 2 H2O. Functionally, involved in iodate respiration. Probably reduces the H(2)O(2) produced by IdrA/IdrB to H(2)O, using a reduced cytochrome c as the electron donor. In Pseudomonas sp. (strain SCT), this protein is Cytochrome-c peroxidase IdrP2.